The primary structure comprises 70 residues: Small ribosomal subunit protein bS21 (70 aa).

It belongs to the bacterial ribosomal protein bS21 family.

This is Small ribosomal subunit protein bS21 from Wolinella succinogenes (strain ATCC 29543 / DSM 1740 / CCUG 13145 / JCM 31913 / LMG 7466 / NCTC 11488 / FDC 602W) (Vibrio succinogenes).